A 437-amino-acid chain; its full sequence is Glycogen synthase (437 aa).

Lysine 15 serves as a coordination point for ADP-alpha-D-glucose.

Belongs to the glycosyltransferase 1 family. Bacterial/plant glycogen synthase subfamily.

It carries out the reaction [(1-&gt;4)-alpha-D-glucosyl](n) + ADP-alpha-D-glucose = [(1-&gt;4)-alpha-D-glucosyl](n+1) + ADP + H(+). It functions in the pathway glycan biosynthesis; glycogen biosynthesis. Functionally, synthesizes alpha-1,4-glucan chains using ADP-glucose. In Thermus thermophilus (strain ATCC BAA-163 / DSM 7039 / HB27), this protein is Glycogen synthase.